We begin with the raw amino-acid sequence, 499 residues long: Probable cytosol aminopeptidase (499 aa).

2 residues coordinate Mn(2+): lysine 271 and aspartate 276. Lysine 283 is a catalytic residue. 3 residues coordinate Mn(2+): aspartate 294, aspartate 353, and glutamate 355. Arginine 357 is a catalytic residue.

The protein belongs to the peptidase M17 family. Mn(2+) serves as cofactor.

The protein resides in the cytoplasm. It carries out the reaction Release of an N-terminal amino acid, Xaa-|-Yaa-, in which Xaa is preferably Leu, but may be other amino acids including Pro although not Arg or Lys, and Yaa may be Pro. Amino acid amides and methyl esters are also readily hydrolyzed, but rates on arylamides are exceedingly low.. The enzyme catalyses Release of an N-terminal amino acid, preferentially leucine, but not glutamic or aspartic acids.. Functionally, presumably involved in the processing and regular turnover of intracellular proteins. Catalyzes the removal of unsubstituted N-terminal amino acids from various peptides. The polypeptide is Probable cytosol aminopeptidase (Bordetella bronchiseptica (strain ATCC BAA-588 / NCTC 13252 / RB50) (Alcaligenes bronchisepticus)).